The sequence spans 235 residues: Glutathione S-transferase L3 (235 aa).

Residues 27–108 (GTTRLYTSYV…YLDNTFEGPS (82 aa)) enclose the GST N-terminal domain. Glutathione contacts are provided by residues 37–38 (CP), 65–66 (NR), 79–80 (KV), and 92–93 (ES). In terms of domain architecture, GST C-terminal spans 86–230 (NGKIIGESLD…MDPKEIVEVF (145 aa)).

The protein belongs to the GST superfamily. Lambda family.

The protein localises to the cytoplasm. It is found in the cytosol. It catalyses the reaction RX + glutathione = an S-substituted glutathione + a halide anion + H(+). Functionally, catalyzes the glutathione-dependent reduction of S-glutathionylquercetin to quercetin. This is Glutathione S-transferase L3 (GSTL3) from Arabidopsis thaliana (Mouse-ear cress).